The sequence spans 158 residues: uncharacterized protein (158 aa).

This is an uncharacterized protein from Pasteurella multocida (strain Pm70).